The following is a 157-amino-acid chain: Small ribosomal subunit protein uS9 (157 aa).

This sequence belongs to the universal ribosomal protein uS9 family.

This chain is Small ribosomal subunit protein uS9, found in Caulobacter sp. (strain K31).